A 511-amino-acid chain; its full sequence is Glucans biosynthesis protein G (511 aa).

The N-terminal stretch at 1–22 (MMKMRWLSAAVMLTLYTSSSWA) is a signal peptide.

The protein belongs to the OpgD/OpgG family.

The protein localises to the periplasm. The protein operates within glycan metabolism; osmoregulated periplasmic glucan (OPG) biosynthesis. In terms of biological role, involved in the biosynthesis of osmoregulated periplasmic glucans (OPGs). This chain is Glucans biosynthesis protein G, found in Escherichia fergusonii (strain ATCC 35469 / DSM 13698 / CCUG 18766 / IAM 14443 / JCM 21226 / LMG 7866 / NBRC 102419 / NCTC 12128 / CDC 0568-73).